A 218-amino-acid chain; its full sequence is N-(5'-phosphoribosyl)anthranilate isomerase (218 aa).

Belongs to the TrpF family.

The enzyme catalyses N-(5-phospho-beta-D-ribosyl)anthranilate = 1-(2-carboxyphenylamino)-1-deoxy-D-ribulose 5-phosphate. It participates in amino-acid biosynthesis; L-tryptophan biosynthesis; L-tryptophan from chorismate: step 3/5. The polypeptide is N-(5'-phosphoribosyl)anthranilate isomerase (Halalkalibacterium halodurans (strain ATCC BAA-125 / DSM 18197 / FERM 7344 / JCM 9153 / C-125) (Bacillus halodurans)).